A 428-amino-acid polypeptide reads, in one-letter code: Putative aminotransferase MSMEG_6286/MSMEI_6121 (428 aa).

Glycine 37 contributes to the substrate binding site. Pyridoxal 5'-phosphate is bound by residues tyrosine 72, 102–105 (ASLE), asparagine 191, 222–225 (AYAV), and 256–258 (STS). An Isoglutamyl lysine isopeptide (Lys-Gln) (interchain with Q-Cter in protein Pup) cross-link involves residue lysine 339.

It belongs to the class-I pyridoxal-phosphate-dependent aminotransferase family. It depends on pyridoxal 5'-phosphate as a cofactor.

In Mycolicibacterium smegmatis (strain ATCC 700084 / mc(2)155) (Mycobacterium smegmatis), this protein is Putative aminotransferase MSMEG_6286/MSMEI_6121.